A 340-amino-acid chain; its full sequence is Protein RecA (340 aa).

Residue 74–81 (GPESSGKT) participates in ATP binding.

It belongs to the RecA family.

The protein resides in the cytoplasm. Its function is as follows. Can catalyze the hydrolysis of ATP in the presence of single-stranded DNA, the ATP-dependent uptake of single-stranded DNA by duplex DNA, and the ATP-dependent hybridization of homologous single-stranded DNAs. It interacts with LexA causing its activation and leading to its autocatalytic cleavage. In Porphyromonas gingivalis (strain ATCC 33277 / DSM 20709 / CIP 103683 / JCM 12257 / NCTC 11834 / 2561), this protein is Protein RecA.